Here is a 291-residue protein sequence, read N- to C-terminus: MADLDDIKDGKDFRTDQPQKNIPFTLKGCGALDWGMQSRLSRIFNPKTGKTVMLAFDHGYFQGPTTGLERIDINIAPLFEHADVLMCTRGILRSVVPPATNRPVVLRASGANSILAELSNEAVALSMDDAVRLNSCAVAAQVYIGSEYEHQSIKNIIQLVDAGMKVGMPTMAVTGVGKDMVRDQRYFSLATRIAAEMGAQIIKTYYVEKGFERIVAGCPVPIVIAGGKKLPEREALEMCWQAIDQGASGVDMGRNIFQSDHPVAMMKAVQAVVHHNETADRAYELYLSEKQ.

Lysine 203 serves as the catalytic Schiff-base intermediate with substrate.

Belongs to the DeoC/FbaB aldolase family. As to quaternary structure, homodecamer.

The protein localises to the cytoplasm. It catalyses the reaction dihydroxyacetone phosphate + acetyl-CoA = 3-hydroxy-2,4-dioxopentyl phosphate + CoA. Functionally, involved in the degradation of phospho-AI-2, thereby terminating induction of the lsr operon and closing the AI-2 signaling cycle. Catalyzes the transfer of an acetyl moiety from 3-hydroxy-5-phosphonooxypentane-2,4-dione to CoA to form glycerone phosphate and acetyl-CoA. In Escherichia coli (strain K12 / DH10B), this protein is 3-hydroxy-5-phosphonooxypentane-2,4-dione thiolase.